Reading from the N-terminus, the 21-residue chain is Glucan endo-1,3-beta-glucosidase 2 (21 aa).

The disordered stretch occupies residues 1–21 (APGDLLWSDEFDGAAGSAPNP).

The enzyme catalyses Hydrolysis of (1-&gt;3)-beta-D-glucosidic linkages in (1-&gt;3)-beta-D-glucans.. In Papiliotrema laurentii (Cryptococcus laurentii), this protein is Glucan endo-1,3-beta-glucosidase 2.